A 352-amino-acid polypeptide reads, in one-letter code: Glycoprotein integral membrane protein 1 (352 aa).

Residues 1–25 (MASRCKIHLTVAYLLILCILASAQS) form the signal peptide. Residues 26 to 281 (KQMTTETVVL…KLRRFLSDSV (256 aa)) lie on the Extracellular side of the membrane. Residues Asn36, Asn44, Asn89, Asn109, Asn151, and Asn197 are each glycosylated (N-linked (GlcNAc...) asparagine). Residues 206 to 245 (NSETTQEEIAAPGKLPETPLRMDPETLYESREEEERRSDS) form a disordered region. The segment covering 225-244 (LRMDPETLYESREEEERRSD) has biased composition (basic and acidic residues). Residues 282–302 (PLFFLVMWVVVVGVAGSAVVI) form a helical membrane-spanning segment. Over 303 to 352 (KILDLIFPSCEHRGFFHLNPETLMPDDEKVSLIDNMEGDMTEKSILLIEK) the chain is Cytoplasmic.

The protein resides in the membrane. The protein is Glycoprotein integral membrane protein 1 (ginm1) of Danio rerio (Zebrafish).